Here is a 265-residue protein sequence, read N- to C-terminus: UDP-N-acetylenolpyruvoylglucosamine reductase (265 aa).

An FAD-binding PCMH-type domain is found at 15–169 (GVGGPAELWT…TRVRLKLKER (155 aa)). Arg149 is an active-site residue. The tract at residues 182–203 (DRARKGQPKRKSAGCAFKNPPG) is disordered. The active-site Proton donor is Cys196.

It belongs to the MurB family. The cofactor is FAD.

Its subcellular location is the cytoplasm. It carries out the reaction UDP-N-acetyl-alpha-D-muramate + NADP(+) = UDP-N-acetyl-3-O-(1-carboxyvinyl)-alpha-D-glucosamine + NADPH + H(+). The protein operates within cell wall biogenesis; peptidoglycan biosynthesis. In terms of biological role, cell wall formation. This is UDP-N-acetylenolpyruvoylglucosamine reductase from Thermus thermophilus (strain ATCC BAA-163 / DSM 7039 / HB27).